Reading from the N-terminus, the 254-residue chain is Imidazole glycerol phosphate synthase subunit HisF (254 aa).

Catalysis depends on residues Asp-14 and Asp-133.

The protein belongs to the HisA/HisF family. In terms of assembly, heterodimer of HisH and HisF.

The protein localises to the cytoplasm. The catalysed reaction is 5-[(5-phospho-1-deoxy-D-ribulos-1-ylimino)methylamino]-1-(5-phospho-beta-D-ribosyl)imidazole-4-carboxamide + L-glutamine = D-erythro-1-(imidazol-4-yl)glycerol 3-phosphate + 5-amino-1-(5-phospho-beta-D-ribosyl)imidazole-4-carboxamide + L-glutamate + H(+). It functions in the pathway amino-acid biosynthesis; L-histidine biosynthesis; L-histidine from 5-phospho-alpha-D-ribose 1-diphosphate: step 5/9. IGPS catalyzes the conversion of PRFAR and glutamine to IGP, AICAR and glutamate. The HisF subunit catalyzes the cyclization activity that produces IGP and AICAR from PRFAR using the ammonia provided by the HisH subunit. This chain is Imidazole glycerol phosphate synthase subunit HisF, found in Nitratiruptor sp. (strain SB155-2).